Here is a 143-residue protein sequence, read N- to C-terminus: Large ribosomal subunit protein uL13c (143 aa).

The protein belongs to the universal ribosomal protein uL13 family. In terms of assembly, part of the 50S ribosomal subunit.

Its subcellular location is the plastid. The protein resides in the chloroplast. This Gracilaria tenuistipitata var. liui (Red alga) protein is Large ribosomal subunit protein uL13c.